Reading from the N-terminus, the 436-residue chain is Serine/threonine-protein kinase STK11 (436 aa).

Position 31 is a phosphoserine (S31). Residues K44 and K48 each carry the N6-acetyllysine modification. The segment at 45 to 90 (LIGKYLMGDLLGEGSYGKVKEVLDSETLCRRAVKILKKKKLRRIPN) is sufficient for interaction with SIRT1. The Protein kinase domain occupies 49–309 (YLMGDLLGEG…IRQIRQHSWF (261 aa)). Residues 55 to 63 (LGEGSYGKV) and K78 contribute to the ATP site. N6-acetyllysine occurs at positions 96 and 97. The Proton acceptor role is filled by D176. A Phosphothreonine; by autocatalysis modification is found at T189. N6-acetyllysine is present on residues K296 and K311. Phosphoserine is present on S325. T336 is modified (phosphothreonine; by autocatalysis). T366 carries the phosphothreonine; by ATM and autocatalysis modification. A disordered region spans residues 398–421 (TEPQLSSKVKPEGRPGTANPARKV). Phosphoserine is present on S403. K420 is modified (N6-acetyllysine). A lipid anchor (S-palmitoyl cysteine) is attached at C422. K426 bears the N6-acetyllysine mark. S431 is subject to Phosphoserine; by autocatalysis, PKA, PKC/PRKCZ and RPS6KA1. The residue at position 433 (C433) is a Cysteine methyl ester. The S-farnesyl cysteine moiety is linked to residue C433. K434 bears the N6-acetyllysine mark. A propeptide spans 434 to 436 (KQQ) (removed in mature form).

Belongs to the protein kinase superfamily. CAMK Ser/Thr protein kinase family. LKB1 subfamily. In terms of assembly, catalytic component of a trimeric complex composed of STK11/LKB1, STRAD (STRADA or STRADB) and CAB39/MO25 (CAB39/MO25alpha or CAB39L/MO25beta): the complex tethers STK11/LKB1 in the cytoplasm and stimulates its catalytic activity. Found in a ternary complex composed of SMAD4, STK11/LKB1 and STK11IP. Interacts with p53/TP53, SMAD4, STK11IP and WDR6. Interacts with NR4A1. Interacts with NISCH; this interaction may increase STK11 activity. Interacts with PTEN, leading to PTEN phosphorylation. Interacts with SIRT1; the interaction deacetylates STK11. Interacts with CDKN1A. It depends on Mg(2+) as a cofactor. Requires Mn(2+) as cofactor. Post-translationally, phosphorylated by ATM at Thr-366 following ionizing radiation (IR). Phosphorylation at Ser-431 by RPS6KA1 and/or some PKA is required to inhibit cell growth. Phosphorylation at Ser-431 is also required during neuronal polarization to mediate phosphorylation of BRSK1 and BRSK2. Phosphorylation by PKC/PRKCZ at Ser-399 in isoform 2 promotes metformin (or peroxynitrite)-induced nuclear export of STK11 and activation of AMPK. UV radiation-induced phosphorylation at Thr-366 mediates CDKN1A degradation. In terms of processing, acetylated. Deacetylation at Lys-48 enhances cytoplasmic localization and kinase activity in vitro. In terms of tissue distribution, widely expressed. Predominantly expressed in testis (at protein level). As to expression, expressed in adult brain and liver and absent from tissues derived from postnatal day 7.

Its subcellular location is the nucleus. The protein localises to the cytoplasm. The protein resides in the membrane. It is found in the mitochondrion. It catalyses the reaction L-seryl-[protein] + ATP = O-phospho-L-seryl-[protein] + ADP + H(+). It carries out the reaction L-threonyl-[protein] + ATP = O-phospho-L-threonyl-[protein] + ADP + H(+). Activated by forming a complex with STRAD (STRADA or STRADB) and CAB39/MO25 (CAB39/MO25alpha or CAB39L/MO25beta): STRADA (or STRADB)-binding promotes a conformational change of STK11/LKB1 in an active conformation, which is stabilized by CAB39/MO25alpha (or CAB39L/MO25beta) interacting with the STK11/LKB1 activation loop. Sequestration in the nucleus by NR4A1 prevents it from phosphorylating and activating cytoplasmic AMPK. Functionally, tumor suppressor serine/threonine-protein kinase that controls the activity of AMP-activated protein kinase (AMPK) family members, thereby playing a role in various processes such as cell metabolism, cell polarity, apoptosis and DNA damage response. Acts by phosphorylating the T-loop of AMPK family proteins, thus promoting their activity: phosphorylates PRKAA1, PRKAA2, BRSK1, BRSK2, MARK1, MARK2, MARK3, MARK4, NUAK1, NUAK2, SIK1, SIK2, SIK3 and SNRK but not MELK. Also phosphorylates non-AMPK family proteins such as STRADA, PTEN and possibly p53/TP53. Acts as a key upstream regulator of AMPK by mediating phosphorylation and activation of AMPK catalytic subunits PRKAA1 and PRKAA2 and thereby regulates processes including: inhibition of signaling pathways that promote cell growth and proliferation when energy levels are low, glucose homeostasis in liver, activation of autophagy when cells undergo nutrient deprivation, and B-cell differentiation in the germinal center in response to DNA damage. Also acts as a regulator of cellular polarity by remodeling the actin cytoskeleton. Required for cortical neuron polarization by mediating phosphorylation and activation of BRSK1 and BRSK2, leading to axon initiation and specification. Involved in DNA damage response: interacts with p53/TP53 and recruited to the CDKN1A/WAF1 promoter to participate in transcription activation. Able to phosphorylate p53/TP53; the relevance of such result in vivo is however unclear and phosphorylation may be indirect and mediated by downstream STK11/LKB1 kinase NUAK1. Also acts as a mediator of p53/TP53-dependent apoptosis via interaction with p53/TP53: translocates to the mitochondrion during apoptosis and regulates p53/TP53-dependent apoptosis pathways. Regulates UV radiation-induced DNA damage response mediated by CDKN1A. In association with NUAK1, phosphorylates CDKN1A in response to UV radiation and contributes to its degradation which is necessary for optimal DNA repair. In terms of biological role, has a role in spermiogenesis. The sequence is that of Serine/threonine-protein kinase STK11 from Mus musculus (Mouse).